Consider the following 279-residue polypeptide: Sarcosine/dimethylglycine N-methyltransferase (279 aa).

The protein belongs to the methyltransferase superfamily. Monomer.

It catalyses the reaction sarcosine + 2 S-adenosyl-L-methionine = glycine betaine + 2 S-adenosyl-L-homocysteine + 2 H(+). The catalysed reaction is sarcosine + S-adenosyl-L-methionine = N,N-dimethylglycine + S-adenosyl-L-homocysteine + H(+). It carries out the reaction N,N-dimethylglycine + S-adenosyl-L-methionine = glycine betaine + S-adenosyl-L-homocysteine + H(+). It functions in the pathway amine and polyamine biosynthesis; betaine biosynthesis via glycine pathway; betaine from glycine: step 2/3. Its pathway is amine and polyamine biosynthesis; betaine biosynthesis via glycine pathway; betaine from glycine: step 3/3. Its activity is regulated as follows. p-chloromercuribenzoate acid inhibits 23% of the SDMT activities on sarcosine and dimethylglycine, and S-adenosylhomocysteine (AdoHcy) inhibits completely GSMT activities. In terms of biological role, catalyzes the methylation of sarcosine and dimethylglycine to dimethylglycine and betaine, respectively, with S-adenosylmethionine (AdoMet) acting as the methyl donor. It has strict specificity for sarcosine and dimethylglycine as the methyl group acceptors. In Halorhodospira halochloris (Ectothiorhodospira halochloris), this protein is Sarcosine/dimethylglycine N-methyltransferase.